Consider the following 353-residue polypeptide: Phosphate acyltransferase (353 aa).

The protein belongs to the PlsX family. In terms of assembly, homodimer. Probably interacts with PlsY.

The protein localises to the cytoplasm. It catalyses the reaction a fatty acyl-[ACP] + phosphate = an acyl phosphate + holo-[ACP]. It participates in lipid metabolism; phospholipid metabolism. Functionally, catalyzes the reversible formation of acyl-phosphate (acyl-PO(4)) from acyl-[acyl-carrier-protein] (acyl-ACP). This enzyme utilizes acyl-ACP as fatty acyl donor, but not acyl-CoA. The polypeptide is Phosphate acyltransferase (Afipia carboxidovorans (strain ATCC 49405 / DSM 1227 / KCTC 32145 / OM5) (Oligotropha carboxidovorans)).